The primary structure comprises 459 residues: Glycosyl hydrolase family 109 protein 1 (459 aa).

A signal peptide (tat-type signal) is located at residues 1–31 (MHNIHRRHFLKAAGAVTAGLVTANIALNANA). NAD(+) contacts are provided by residues 64 to 65 (ER), D86, 135 to 138 (WEWH), 155 to 156 (EV), and N184. Residues Y213, R232, 244–247 (YPTH), and Y326 contribute to the substrate site. Y244 contributes to the NAD(+) binding site.

The protein belongs to the Gfo/Idh/MocA family. Glycosyl hydrolase 109 subfamily. The cofactor is NAD(+). Post-translationally, predicted to be exported by the Tat system. The position of the signal peptide cleavage has not been experimentally proven.

Glycosidase. The polypeptide is Glycosyl hydrolase family 109 protein 1 (Shewanella sp. (strain MR-4)).